The sequence spans 655 residues: p-hydroxybenzoic acid efflux pump subunit AaeB (655 aa).

11 consecutive transmembrane segments (helical) span residues phenylalanine 13–leucine 33, tryptophan 38–proline 58, leucine 69–isoleucine 89, leucine 93–valine 113, tryptophan 121–leucine 141, glutamate 152–isoleucine 172, leucine 370–valine 390, phenylalanine 407–proline 427, glutamine 431–valine 451, methionine 459–phenylalanine 479, and phenylalanine 482–leucine 502.

Belongs to the aromatic acid exporter ArAE (TC 2.A.85) family.

The protein resides in the cell inner membrane. Its function is as follows. Forms an efflux pump with AaeA. Could function as a metabolic relief valve, allowing to eliminate certain compounds when they accumulate to high levels in the cell. In Salmonella arizonae (strain ATCC BAA-731 / CDC346-86 / RSK2980), this protein is p-hydroxybenzoic acid efflux pump subunit AaeB.